The primary structure comprises 237 residues: 1-(5-phosphoribosyl)-5-[(5-phosphoribosylamino)methylideneamino] imidazole-4-carboxamide isomerase (237 aa).

Asp8 (proton acceptor) is an active-site residue. Asp129 serves as the catalytic Proton donor.

It belongs to the HisA/HisF family.

It is found in the cytoplasm. It catalyses the reaction 1-(5-phospho-beta-D-ribosyl)-5-[(5-phospho-beta-D-ribosylamino)methylideneamino]imidazole-4-carboxamide = 5-[(5-phospho-1-deoxy-D-ribulos-1-ylimino)methylamino]-1-(5-phospho-beta-D-ribosyl)imidazole-4-carboxamide. Its pathway is amino-acid biosynthesis; L-histidine biosynthesis; L-histidine from 5-phospho-alpha-D-ribose 1-diphosphate: step 4/9. The sequence is that of 1-(5-phosphoribosyl)-5-[(5-phosphoribosylamino)methylideneamino] imidazole-4-carboxamide isomerase from Roseiflexus castenholzii (strain DSM 13941 / HLO8).